The sequence spans 184 residues: ATP synthase subunit b, chloroplastic (184 aa).

The chain crosses the membrane as a helical span at residues 27–49; that stretch reads LATNPINLSVVLGVLIFFGKGVL.

The protein belongs to the ATPase B chain family. F-type ATPases have 2 components, F(1) - the catalytic core - and F(0) - the membrane proton channel. F(1) has five subunits: alpha(3), beta(3), gamma(1), delta(1), epsilon(1). F(0) has four main subunits: a(1), b(1), b'(1) and c(10-14). The alpha and beta chains form an alternating ring which encloses part of the gamma chain. F(1) is attached to F(0) by a central stalk formed by the gamma and epsilon chains, while a peripheral stalk is formed by the delta, b and b' chains.

The protein resides in the plastid. The protein localises to the chloroplast thylakoid membrane. In terms of biological role, f(1)F(0) ATP synthase produces ATP from ADP in the presence of a proton or sodium gradient. F-type ATPases consist of two structural domains, F(1) containing the extramembraneous catalytic core and F(0) containing the membrane proton channel, linked together by a central stalk and a peripheral stalk. During catalysis, ATP synthesis in the catalytic domain of F(1) is coupled via a rotary mechanism of the central stalk subunits to proton translocation. Component of the F(0) channel, it forms part of the peripheral stalk, linking F(1) to F(0). The polypeptide is ATP synthase subunit b, chloroplastic (Carica papaya (Papaya)).